We begin with the raw amino-acid sequence, 307 residues long: Ribosomal protein L11 methyltransferase (307 aa).

S-adenosyl-L-methionine is bound by residues threonine 154, glycine 178, aspartate 200, and asparagine 242.

Belongs to the methyltransferase superfamily. PrmA family.

It localises to the cytoplasm. The catalysed reaction is L-lysyl-[protein] + 3 S-adenosyl-L-methionine = N(6),N(6),N(6)-trimethyl-L-lysyl-[protein] + 3 S-adenosyl-L-homocysteine + 3 H(+). Methylates ribosomal protein L11. The chain is Ribosomal protein L11 methyltransferase from Syntrophotalea carbinolica (strain DSM 2380 / NBRC 103641 / GraBd1) (Pelobacter carbinolicus).